The chain runs to 335 residues: Eukaryotic translation initiation factor 3 subunit I (335 aa).

WD repeat units follow at residues G8–T47, G50–D91, C145–N184, E189–T228, and G286–M325.

The protein belongs to the eIF-3 subunit I family. Component of the eukaryotic translation initiation factor 3 (eIF-3) complex.

Its subcellular location is the cytoplasm. Its function is as follows. Component of the eukaryotic translation initiation factor 3 (eIF-3) complex, which is involved in protein synthesis of a specialized repertoire of mRNAs and, together with other initiation factors, stimulates binding of mRNA and methionyl-tRNAi to the 40S ribosome. The eIF-3 complex specifically targets and initiates translation of a subset of mRNAs involved in cell proliferation. The protein is Eukaryotic translation initiation factor 3 subunit I (tif34) of Aspergillus oryzae (strain ATCC 42149 / RIB 40) (Yellow koji mold).